Reading from the N-terminus, the 621-residue chain is MSRQNLVALTVTTLLGVAVGGFVLWKGIQRRRRSKTSPVTQQPQQKVLGSRELPPPEDDQLHSSAPRSSWKERILKAKVVTVSQEAEWDQIEPLLRSELEDFPVLGIDCEWVNLEGKASPLSLLQMASPSGLCVLVRLPKLICGGKTLPRTLLDILADGTILKVGVGCSEDASKLLQDYGLVVRGCLDLRYLAMRQRNNLLCNGLSLKSLAETVLNFPLDKSLLLRCSNWDAETLTEDQVIYAARDAQISVALFLHLLGYPFSRNSPGEKNDDHSSWRKVLEKCQGVVDIPFRSKGMSRLGEEVNGEATESQQKPRNKKSKMDGMVPGNHQGRDPRKHKRKPLGVGYSARKSPLYDNCFLHAPDGQPLCTCDRRKAQWYLDKGIGELVSEEPFVVKLRFEPAGRPESPGDYYLMVKENLCVVCGKRDSYIRKNVIPHEYRKHFPIEMKDHNSHDVLLLCTSCHAISNYYDNHLKQQLAKEFQAPIGSEEGLRLLEDPERRQVRSGARALLNAESLPTQRKEELLQALREFYNTDVVTEEMLQEAASLETRISNENYVPHGLKVVQCHSQGGLRSLMQLESRWRQHFLDSMQPKHLPQQWSVDHNHQKLLRKFGEDLPIQLS.

At 1-4 (MSRQ) the chain is on the mitochondrial intermembrane side. Residues 5–25 (NLVALTVTTLLGVAVGGFVLW) form a helical membrane-spanning segment. At 26 to 621 (KGIQRRRRSK…FGEDLPIQLS (596 aa)) the chain is on the cytoplasmic side. A disordered region spans residues 34 to 68 (SKTSPVTQQPQQKVLGSRELPPPEDDQLHSSAPRS). The segment covering 36-47 (TSPVTQQPQQKV) has biased composition (polar residues). Asp-108, Glu-110, and Asp-246 together coordinate a divalent metal cation. In terms of domain architecture, 3'-5' exonuclease spans 155-247 (ILADGTILKV…DQVIYAARDA (93 aa)). The segment at 299–343 (RLGEEVNGEATESQQKPRNKKSKMDGMVPGNHQGRDPRKHKRKPL) is disordered.

Belongs to the EXD2 family. Homodimer. Interacts with RBBP8, MRE11 and BRCA1. Mg(2+) serves as cofactor. Mn(2+) is required as a cofactor.

It localises to the mitochondrion outer membrane. Its subcellular location is the mitochondrion matrix. The protein resides in the nucleus. The protein localises to the chromosome. The catalysed reaction is Exonucleolytic cleavage in the 3'- to 5'-direction to yield nucleoside 5'-phosphates.. Functionally, exonuclease that has both 3'-5' exoribonuclease and exodeoxyribonuclease activities, depending on the divalent metal cation used as cofactor. In presence of Mg(2+), only shows 3'-5' exoribonuclease activity, while it shows both exoribonuclease and exodeoxyribonuclease activities in presence of Mn(2+). Acts as an exoribonuclease in mitochondrion, possibly by regulating ATP production and mitochondrial translation. Also involved in the response to DNA damage. Acts as 3'-5' exodeoxyribonuclease for double-strand breaks resection and efficient homologous recombination. Plays a key role in controlling the initial steps of chromosomal break repair, it is recruited to chromatin in a damage-dependent manner and functionally interacts with the MRN complex to accelerate resection through its 3'-5' exonuclease activity, which efficiently processes double-stranded DNA substrates containing nicks. Also involved in response to replicative stress: recruited to stalled forks and is required to stabilize and restart stalled replication forks by restraining excessive fork regression, thereby suppressing their degradation. This Homo sapiens (Human) protein is Exonuclease 3'-5' domain-containing protein 2.